The sequence spans 110 residues: Protein RnfH (110 aa).

Residues 86 to 110 (RQRRVEKTRKAGSIEGRRWQNKDSR) form a disordered region. Residues 100–110 (EGRRWQNKDSR) are compositionally biased toward basic and acidic residues.

Belongs to the UPF0125 (RnfH) family.

The polypeptide is Protein RnfH (Paraburkholderia xenovorans (strain LB400)).